The sequence spans 355 residues: 3-dehydroquinate synthase (355 aa).

NAD(+) is bound by residues 71–76, 105–109, 129–130, K142, and K151; these read EGEERK, GVVGD, and TS. E184, H246, and H263 together coordinate Zn(2+).

The protein belongs to the sugar phosphate cyclases superfamily. Dehydroquinate synthase family. Requires NAD(+) as cofactor. Co(2+) serves as cofactor. Zn(2+) is required as a cofactor.

The protein resides in the cytoplasm. It carries out the reaction 7-phospho-2-dehydro-3-deoxy-D-arabino-heptonate = 3-dehydroquinate + phosphate. It functions in the pathway metabolic intermediate biosynthesis; chorismate biosynthesis; chorismate from D-erythrose 4-phosphate and phosphoenolpyruvate: step 2/7. Functionally, catalyzes the conversion of 3-deoxy-D-arabino-heptulosonate 7-phosphate (DAHP) to dehydroquinate (DHQ). The protein is 3-dehydroquinate synthase of Streptococcus pneumoniae serotype 4 (strain ATCC BAA-334 / TIGR4).